We begin with the raw amino-acid sequence, 274 residues long: 2,3,4,5-tetrahydropyridine-2,6-dicarboxylate N-succinyltransferase (274 aa).

Substrate-binding residues include R106 and D143.

It belongs to the transferase hexapeptide repeat family. As to quaternary structure, homotrimer.

The protein resides in the cytoplasm. It carries out the reaction (S)-2,3,4,5-tetrahydrodipicolinate + succinyl-CoA + H2O = (S)-2-succinylamino-6-oxoheptanedioate + CoA. Its pathway is amino-acid biosynthesis; L-lysine biosynthesis via DAP pathway; LL-2,6-diaminopimelate from (S)-tetrahydrodipicolinate (succinylase route): step 1/3. The sequence is that of 2,3,4,5-tetrahydropyridine-2,6-dicarboxylate N-succinyltransferase from Rickettsia typhi (strain ATCC VR-144 / Wilmington).